A 71-amino-acid chain; its full sequence is MKADIHPNYEVVAVTCSCGNKFETRSTLGSVLAIDVCNLCHPFYTGKQKVLDTGGRVQKFADRFGMFGTKK.

4 residues coordinate Zn(2+): cysteine 16, cysteine 18, cysteine 37, and cysteine 40.

It belongs to the bacterial ribosomal protein bL31 family. Type A subfamily. As to quaternary structure, part of the 50S ribosomal subunit. Zn(2+) is required as a cofactor.

Functionally, binds the 23S rRNA. In Pseudomonas entomophila (strain L48), this protein is Large ribosomal subunit protein bL31.